The following is a 499-amino-acid chain: Probable cytosol aminopeptidase (499 aa).

Mn(2+) contacts are provided by K269 and D274. K281 is an active-site residue. Residues D292, D351, and E353 each contribute to the Mn(2+) site. R355 is an active-site residue.

It belongs to the peptidase M17 family. Mn(2+) serves as cofactor.

The protein resides in the cytoplasm. The catalysed reaction is Release of an N-terminal amino acid, Xaa-|-Yaa-, in which Xaa is preferably Leu, but may be other amino acids including Pro although not Arg or Lys, and Yaa may be Pro. Amino acid amides and methyl esters are also readily hydrolyzed, but rates on arylamides are exceedingly low.. It carries out the reaction Release of an N-terminal amino acid, preferentially leucine, but not glutamic or aspartic acids.. In terms of biological role, presumably involved in the processing and regular turnover of intracellular proteins. Catalyzes the removal of unsubstituted N-terminal amino acids from various peptides. The protein is Probable cytosol aminopeptidase of Actinobacillus pleuropneumoniae serotype 7 (strain AP76).